A 111-amino-acid polypeptide reads, in one-letter code: Small ribosomal subunit protein uS17 (111 aa).

The protein belongs to the universal ribosomal protein uS17 family. As to quaternary structure, part of the 30S ribosomal subunit.

One of the primary rRNA binding proteins, it binds specifically to the 5'-end of 16S ribosomal RNA. The polypeptide is Small ribosomal subunit protein uS17 (Archaeoglobus fulgidus (strain ATCC 49558 / DSM 4304 / JCM 9628 / NBRC 100126 / VC-16)).